The following is a 1150-amino-acid chain: Serine/threonine-protein phosphatase 2A regulatory subunit B'' subunit alpha (1150 aa).

The tract at residues 661–693 is disordered; sequence PEVIKIQNKPEKKPGTPLPPPATSPSSPRPLSP. Positions 676 to 693 are enriched in pro residues; that stretch reads TPLPPPATSPSSPRPLSP. 2 consecutive EF-hand domains span residues 758-793 and 972-1007; these read CPLY…LLNN and RNPT…QCER. Ca(2+)-binding residues include Asp985, Asp987, Asp989, and Glu996. The disordered stretch occupies residues 1105-1132; the sequence is AQFQEGFEDYETDEPASPSEFGNKSNKI.

PP2A consists of a common heterodimeric core enzyme, composed of a 36 kDa catalytic subunit (subunit C) and a 65 kDa constant regulatory subunit (PR65 or subunit A), that associates with a variety of regulatory subunits. Proteins that associate with the core dimer include three families of regulatory subunits B (the R2/B/PR55/B55, R3/B''/PR72/PR130/PR59 and R5/B'/B56 families), the 48 kDa variable regulatory subunit, viral proteins, and cell signaling molecules. Expressed in heart, brain, placenta, lung, muscle and kidney.

Functionally, the B regulatory subunit might modulate substrate selectivity and catalytic activity, and might also direct the localization of the catalytic enzyme to a particular subcellular compartment. The protein is Serine/threonine-protein phosphatase 2A regulatory subunit B'' subunit alpha (PPP2R3A) of Homo sapiens (Human).